The chain runs to 578 residues: Sulfite reductase [NADPH] hemoprotein beta-component (578 aa).

The [4Fe-4S] cluster site is built by Cys-441, Cys-447, Cys-487, and Cys-491. Cys-491 lines the siroheme pocket.

It belongs to the nitrite and sulfite reductase 4Fe-4S domain family. In terms of assembly, alpha(8)-beta(8). The alpha component is a flavoprotein, the beta component is a hemoprotein. It depends on siroheme as a cofactor. [4Fe-4S] cluster serves as cofactor.

It carries out the reaction hydrogen sulfide + 3 NADP(+) + 3 H2O = sulfite + 3 NADPH + 4 H(+). Its pathway is sulfur metabolism; hydrogen sulfide biosynthesis; hydrogen sulfide from sulfite (NADPH route): step 1/1. Its function is as follows. Component of the sulfite reductase complex that catalyzes the 6-electron reduction of sulfite to sulfide. This is one of several activities required for the biosynthesis of L-cysteine from sulfate. This is Sulfite reductase [NADPH] hemoprotein beta-component from Vibrio vulnificus (strain CMCP6).